The chain runs to 480 residues: D-inositol 3-phosphate glycosyltransferase (480 aa).

The disordered stretch occupies residues 1 to 42 (MAGVRHDDGSGLIAQRRPVRGEGATRSRGPSGPSNRNVSAAD). Residue His-53 participates in 1D-myo-inositol 3-phosphate binding. UDP-N-acetyl-alpha-D-glucosamine-binding positions include 59–60 (QP) and Gly-67. Residues 64-69 (DAGGMN), Lys-122, Tyr-155, Thr-179, and Arg-199 each bind 1D-myo-inositol 3-phosphate. Arg-273, Lys-278, and Gln-331 together coordinate UDP-N-acetyl-alpha-D-glucosamine. Mg(2+)-binding residues include Phe-340, Arg-341, and Ala-343. 2 residues coordinate UDP-N-acetyl-alpha-D-glucosamine: Glu-353 and Glu-361. A Mg(2+)-binding site is contributed by Thr-367.

The protein belongs to the glycosyltransferase group 1 family. MshA subfamily. Homodimer.

It catalyses the reaction 1D-myo-inositol 3-phosphate + UDP-N-acetyl-alpha-D-glucosamine = 1D-myo-inositol 2-acetamido-2-deoxy-alpha-D-glucopyranoside 3-phosphate + UDP + H(+). Its function is as follows. Catalyzes the transfer of a N-acetyl-glucosamine moiety to 1D-myo-inositol 3-phosphate to produce 1D-myo-inositol 2-acetamido-2-deoxy-glucopyranoside 3-phosphate in the mycothiol (MSH) biosynthesis pathway. MSH and WhiB3 are probably part of a regulatory circuit that mediates gene expression upon acid stress (like that found in host macrophage phagosomes). MSH is one of the major redox buffers which protects bacteria against redox stressors and antibiotics; loss of MSH or ergothioneine (ERG, the other major redox buffer in this bacteria) leads to respiratory alterations and bioenergetic deficiencies that negatively impact virulence. This chain is D-inositol 3-phosphate glycosyltransferase (mshA), found in Mycobacterium bovis (strain ATCC BAA-935 / AF2122/97).